The sequence spans 149 residues: Transcriptional regulator MraZ (149 aa).

SpoVT-AbrB domains lie at 7–54 (KYVN…GISH) and 83–126 (ALQL…QPQN).

Belongs to the MraZ family. Forms oligomers.

Its subcellular location is the cytoplasm. The protein localises to the nucleoid. In Rickettsia canadensis (strain McKiel), this protein is Transcriptional regulator MraZ.